The sequence spans 90 residues: Probable Fe(2+)-trafficking protein (90 aa).

Belongs to the Fe(2+)-trafficking protein family.

Its function is as follows. Could be a mediator in iron transactions between iron acquisition and iron-requiring processes, such as synthesis and/or repair of Fe-S clusters in biosynthetic enzymes. The protein is Probable Fe(2+)-trafficking protein of Bordetella avium (strain 197N).